Here is an 81-residue protein sequence, read N- to C-terminus: Acyl carrier protein (81 aa).

The 79-residue stretch at 2-80 (ASNEEILAGL…DAVSFIANAQ (79 aa)) folds into the Carrier domain. Position 40 is an O-(pantetheine 4'-phosphoryl)serine (Ser40).

This sequence belongs to the acyl carrier protein (ACP) family. In terms of processing, 4'-phosphopantetheine is transferred from CoA to a specific serine of apo-ACP by AcpS. This modification is essential for activity because fatty acids are bound in thioester linkage to the sulfhydryl of the prosthetic group.

Its subcellular location is the cytoplasm. Its pathway is lipid metabolism; fatty acid biosynthesis. In terms of biological role, carrier of the growing fatty acid chain in fatty acid biosynthesis. This Paenarthrobacter aurescens (strain TC1) protein is Acyl carrier protein.